We begin with the raw amino-acid sequence, 262 residues long: Capsid protein (262 aa).

The segment at 183-262 is disordered; that stretch reads APTIEAITRP…SHHRSPSPRK (80 aa). Residues 215 to 233 carry the Bipartite nuclear localization signal motif; the sequence is RRRKVKTTFVYGRRRSKSR. Residues 215 to 234 are compositionally biased toward basic residues; that stretch reads RRRKVKTTFVYGRRRSKSRE. 3 positions are modified to phosphoserine; by host: S232, S239, and S245. The segment covering 252-262 has biased composition (basic residues); it reads SSHHRSPSPRK. Residues 254–260 form an RNA binding region; that stretch reads HHRSPSP.

It belongs to the avihepadnavirus core antigen family. As to quaternary structure, homodimerizes, then multimerizes.

The protein resides in the virion. It is found in the host cytoplasm. In terms of biological role, self assembles to form an icosahedral capsid. Most capsid appear to be large particles with an icosahedral symmetry of T=4 and consist of 240 copies of capsid protein, though a fraction forms smaller T=3 particles consisting of 180 capsid proteins. Entering capsid are transported along microtubules to the nucleus. Phosphorylation of the capsid is thought to induce exposure of nuclear localization signal in the C-terminal portion of the capsid protein that allows binding to the nuclear pore complex via the importin (karyopherin-) alpha and beta. Capsids are imported in intact form through the nuclear pore into the nuclear basket, where it probably binds NUP153. Only capsids that contain the mature viral genome can release the viral DNA and capsid protein into the nucleoplasm. Immature capsids get stucked in the basket. Capsids encapsulate the pre-genomic RNA and the P protein. Pre-genomic RNA is reverse transcribed into DNA while the capsid is still in the cytoplasm. The capsid can then either be directed to the nucleus, providing more genome for transcription, or bud through the endoplasmic reticulum to provide new virions. The protein is Capsid protein (C) of Anas (ducks).